Reading from the N-terminus, the 63-residue chain is Small integral membrane protein 43 (63 aa).

Important for interaction with SLC2A1 and SLC2A3 stretches follow at residues 7 to 29 (LLLY…FVVI) and 51 to 57 (HREPWGF). A helical transmembrane segment spans residues 9–29 (LYLALFFFLLFLLFLLLFVVI).

In terms of assembly, interacts with glucose transporters SLC2A1/GLUT1 and SLC2A3/GLUT3; the interactions may promote SLC2A1- and SLC2A3-mediated glucose transport to meet the energy needs of mesendoderm differentiation. As to expression, accumulates in the posterior primitive streak of mid-gastrulation embryos at 7.0 dpc. In the adult, highly abundant and enriched in the brain compared to other organs.

The protein localises to the cell membrane. Its function is as follows. Required for mesendoderm differentiation. Interacts with glucose transporters and promotes glucose uptake. Probably augments the glucose uptake capacity of glucose transporter proteins to meet the energy needs of mesendoderm differentiation. This chain is Small integral membrane protein 43, found in Mus musculus (Mouse).